Consider the following 168-residue polypeptide: Small ribosomal subunit protein uS5 (168 aa).

The S5 DRBM domain maps to 11-74 (YSEKVVKIDR…EAAKKHLVKI (64 aa)).

Belongs to the universal ribosomal protein uS5 family. Part of the 30S ribosomal subunit. Contacts proteins S4 and S8.

Functionally, with S4 and S12 plays an important role in translational accuracy. In terms of biological role, located at the back of the 30S subunit body where it stabilizes the conformation of the head with respect to the body. The sequence is that of Small ribosomal subunit protein uS5 from Leptospira borgpetersenii serovar Hardjo-bovis (strain JB197).